The following is a 345-amino-acid chain: Phosphoribosylformylglycinamidine cyclo-ligase (345 aa).

This sequence belongs to the AIR synthase family.

It localises to the cytoplasm. It carries out the reaction 2-formamido-N(1)-(5-O-phospho-beta-D-ribosyl)acetamidine + ATP = 5-amino-1-(5-phospho-beta-D-ribosyl)imidazole + ADP + phosphate + H(+). It functions in the pathway purine metabolism; IMP biosynthesis via de novo pathway; 5-amino-1-(5-phospho-D-ribosyl)imidazole from N(2)-formyl-N(1)-(5-phospho-D-ribosyl)glycinamide: step 2/2. This chain is Phosphoribosylformylglycinamidine cyclo-ligase, found in Bifidobacterium longum subsp. infantis (strain ATCC 15697 / DSM 20088 / JCM 1222 / NCTC 11817 / S12).